The chain runs to 239 residues: Proteasome activator complex subunit 2 (239 aa).

The residue at position 2 (Ala2) is an N-acetylalanine. Ser10 carries the post-translational modification Phosphoserine. A disordered region spans residues 65-86; it reads DIPIPDPPPKDDEMETDKQEKK. Residues 72–86 show a composition bias toward basic and acidic residues; the sequence is PPKDDEMETDKQEKK.

It belongs to the PA28 family. As to quaternary structure, heterodimer of PSME1 and PSME2, which forms a hexameric ring.

Implicated in immunoproteasome assembly and required for efficient antigen processing. The PA28 activator complex enhances the generation of class I binding peptides by altering the cleavage pattern of the proteasome. The sequence is that of Proteasome activator complex subunit 2 (PSME2) from Sus scrofa (Pig).